Reading from the N-terminus, the 963-residue chain is TBC1 domain family member 2B (963 aa).

The interval 1–30 (MPGAGARAEEGGGGGEGAAQGAAAEPGAGP) is disordered. Residues 19-30 (AQGAAAEPGAGP) show a composition bias toward low complexity. The PH domain occupies 34–139 (PARLCGYLQK…WLQELQQKRW (106 aa)). Phosphoserine is present on residues Ser155 and Ser317. Residues 272–348 (EKKKLTPEGN…EMQLQVQSQQ (77 aa)) form a disordered region. The segment covering 318 to 348 (GDPSSEGTSGSGSVSIRKPASEMQLQVQSQQ) has biased composition (low complexity). Residues 337–535 (ASEMQLQVQS…AKYSSLEAKL (199 aa)) are a coiled coil. A Phosphoserine modification is found at Ser473. The Rab-GAP TBC domain maps to 662 to 856 (GIPHEHRSKV…KIWDSFLYEG (195 aa)). The residue at position 957 (Ser957) is a Phosphoserine.

Its subcellular location is the early endosome. In terms of biological role, GTPase-activating protein that plays a role in the early steps of endocytosis. The polypeptide is TBC1 domain family member 2B (TBC1D2B) (Homo sapiens (Human)).